Consider the following 170-residue polypeptide: Negative modulator of initiation of replication (170 aa).

The interaction with DNA stretch occupies residues 139-145 (NTNTGRK).

It belongs to the SeqA family. Homodimer. Polymerizes to form helical filaments.

The protein resides in the cytoplasm. Functionally, negative regulator of replication initiation, which contributes to regulation of DNA replication and ensures that replication initiation occurs exactly once per chromosome per cell cycle. Binds to pairs of hemimethylated GATC sequences in the oriC region, thus preventing assembly of replication proteins and re-initiation at newly replicated origins. Repression is relieved when the region becomes fully methylated. This chain is Negative modulator of initiation of replication, found in Tolumonas auensis (strain DSM 9187 / NBRC 110442 / TA 4).